We begin with the raw amino-acid sequence, 219 residues long: Large ribosomal subunit protein uL3 (219 aa).

The disordered stretch occupies residues 133-153; the sequence is GRASHGNSRSHNVPGSIGMAQ. Position 153 is an N5-methylglutamine (Gln153).

This sequence belongs to the universal ribosomal protein uL3 family. Part of the 50S ribosomal subunit. Forms a cluster with proteins L14 and L19. Post-translationally, methylated by PrmB.

Functionally, one of the primary rRNA binding proteins, it binds directly near the 3'-end of the 23S rRNA, where it nucleates assembly of the 50S subunit. In Burkholderia thailandensis (strain ATCC 700388 / DSM 13276 / CCUG 48851 / CIP 106301 / E264), this protein is Large ribosomal subunit protein uL3.